A 284-amino-acid chain; its full sequence is Tryptophan 2,3-dioxygenase (284 aa).

Substrate contacts are provided by residues 53–57 (FIIQH) and Arg119. Heme is bound at residue His242. Thr256 contacts substrate.

It belongs to the tryptophan 2,3-dioxygenase family. In terms of assembly, homotetramer. Heme serves as cofactor.

It catalyses the reaction L-tryptophan + O2 = N-formyl-L-kynurenine. It functions in the pathway amino-acid degradation; L-tryptophan degradation via kynurenine pathway; L-kynurenine from L-tryptophan: step 1/2. It participates in siderophore biosynthesis; quinolobactin biosynthesis. Functionally, heme-dependent dioxygenase that catalyzes the oxidative cleavage of the L-tryptophan (L-Trp) pyrrole ring and converts L-tryptophan to N-formyl-L-kynurenine. Catalyzes the oxidative cleavage of the indole moiety. Required for synthesis of the siderophore quinolobactin. The polypeptide is Tryptophan 2,3-dioxygenase (Pseudomonas fluorescens).